The chain runs to 104 residues: UPF0473 protein LGAS_0424 (104 aa).

The protein belongs to the UPF0473 family.

This is UPF0473 protein LGAS_0424 from Lactobacillus gasseri (strain ATCC 33323 / DSM 20243 / BCRC 14619 / CIP 102991 / JCM 1131 / KCTC 3163 / NCIMB 11718 / NCTC 13722 / AM63).